Reading from the N-terminus, the 622-residue chain is E3 ubiquitin-protein ligase RNF12-A (622 aa).

Disordered regions lie at residues 1 to 26, 67 to 386, and 473 to 514; these read MESA…MDRL, RLQQ…ESER, and NANA…NSRG. Residues 11 to 21 are compositionally biased toward low complexity; sequence SIEQSESQRQS. Polar residues-rich tracts occupy residues 110–138 and 147–163; these read SVRQ…NPNS and INVN…SLDQ. Basic and acidic residues predominate over residues 216 to 242; that stretch reads RSPDQRRTRARTDRSRSPLHHAVDPPI. Positions 247 to 256 are enriched in polar residues; it reads HSSSQTVDTS. Positions 272 to 289 are enriched in low complexity; the sequence is SSQVQNSSSSNETEGSSR. The segment covering 300–317 has biased composition (polar residues); it reads VLGTEGQSQSTVHLSNPE. The segment covering 318 to 331 has biased composition (low complexity); sequence TRSSSQTPQTDSST. A compositionally biased stretch (polar residues) spans 332 to 341; sequence NAETTGTGQR. The segment covering 355–365 has biased composition (basic and acidic residues); it reads RPGDYRQRDSI. Residues 366-382 are compositionally biased toward polar residues; the sequence is ANRTRSRSQTPNNTVTY. The RING-type; atypical zinc-finger motif lies at 568-609; it reads CSVCITEYTEGNKLRKLPCSHEYHIHCIDRWLSENSTCPICR. The PDZ-binding motif lies at 619–622; it reads ESIV.

This sequence belongs to the RNF12 family. Forms homodimers through the C-terminal region. The N-terminus interacts with the homeobox of LIM/homeobox factor lhx1/lim1, with lhx3/lim3 and lhx5/lim5, and with the N-terminus of ldb1. As to expression, shows overlapping expression with lhx1/lim1 and ldb1 in the gastrula mesoderm, and expression overlaps with ldb1 throughout early embryogenesis. After gastrulation, expression is gradually restricted to tissues originated from the ectoderm, the neuroectoderm, neural crest and epidermis, and subsequently to the neural tube as well as the head and tailbud region.

The protein resides in the nucleus. The enzyme catalyses S-ubiquitinyl-[E2 ubiquitin-conjugating enzyme]-L-cysteine + [acceptor protein]-L-lysine = [E2 ubiquitin-conjugating enzyme]-L-cysteine + N(6)-ubiquitinyl-[acceptor protein]-L-lysine.. It functions in the pathway protein modification; protein ubiquitination. Functionally, acts as an E3 ubiquitin-protein ligase specific for ldb1, mediating ubiquitination and proteasome-dependent degradation of excess ldb1 in a RING-dependent manner. Does not degrade ldb1 bound to lhx1/lim1, nor lim1 itself and thus contributes to the establishment of proper ldb1-lhx1/lim1 stoichiometry and the formation of a ldb1-lhx1/lim1 complex. Interferes with Spemann organizer function and suppresses secondary axis formation induced by ldb1 and lhx1/lim1. The chain is E3 ubiquitin-protein ligase RNF12-A (rnf12-a) from Xenopus laevis (African clawed frog).